Reading from the N-terminus, the 198-residue chain is Nucleoid occlusion factor SlmA (198 aa).

The HTH tetR-type domain occupies 10 to 70; the sequence is NRREEILQSL…SLIEFIEDSL (61 aa). Positions 33 to 52 form a DNA-binding region, H-T-H motif; it reads TTAKLAASVGVSEAALYRHF. Residues 117-144 are a coiled coil; it reads EQDRLQGRINQLFERIEAQLRQVLREKR.

It belongs to the nucleoid occlusion factor SlmA family. Homodimer. Interacts with FtsZ.

It is found in the cytoplasm. The protein resides in the nucleoid. Required for nucleoid occlusion (NO) phenomenon, which prevents Z-ring formation and cell division over the nucleoid. Acts as a DNA-associated cell division inhibitor that binds simultaneously chromosomal DNA and FtsZ, and disrupts the assembly of FtsZ polymers. SlmA-DNA-binding sequences (SBS) are dispersed on non-Ter regions of the chromosome, preventing FtsZ polymerization at these regions. This Salmonella dublin (strain CT_02021853) protein is Nucleoid occlusion factor SlmA.